We begin with the raw amino-acid sequence, 539 residues long: GMP synthase [glutamine-hydrolyzing] (539 aa).

The region spanning 4–202 (KILILDFGSQ…VLGICRAKAD (199 aa)) is the Glutamine amidotransferase type-1 domain. C81 (nucleophile) is an active-site residue. Catalysis depends on residues H176 and E178. The region spanning 203–395 (WVMKDHIEEA…LGLPPEMVYR (193 aa)) is the GMPS ATP-PPase domain. 230–236 (SGGVDSS) provides a ligand contact to ATP.

As to quaternary structure, homodimer.

The enzyme catalyses XMP + L-glutamine + ATP + H2O = GMP + L-glutamate + AMP + diphosphate + 2 H(+). It participates in purine metabolism; GMP biosynthesis; GMP from XMP (L-Gln route): step 1/1. Its function is as follows. Catalyzes the synthesis of GMP from XMP. This is GMP synthase [glutamine-hydrolyzing] from Cupriavidus pinatubonensis (strain JMP 134 / LMG 1197) (Cupriavidus necator (strain JMP 134)).